A 272-amino-acid chain; its full sequence is Dermonecrotic toxin SpeSicTox-betaIB2b (272 aa).

Residue histidine 5 is part of the active site. The Mg(2+) site is built by glutamate 25 and aspartate 27. Catalysis depends on histidine 41, which acts as the Nucleophile. 2 disulfides stabilise this stretch: cysteine 45–cysteine 51 and cysteine 47–cysteine 191. A Mg(2+)-binding site is contributed by aspartate 85.

Belongs to the arthropod phospholipase D family. Class II subfamily. The cofactor is Mg(2+). Expressed by the venom gland.

Its subcellular location is the secreted. It carries out the reaction an N-(acyl)-sphingosylphosphocholine = an N-(acyl)-sphingosyl-1,3-cyclic phosphate + choline. The catalysed reaction is an N-(acyl)-sphingosylphosphoethanolamine = an N-(acyl)-sphingosyl-1,3-cyclic phosphate + ethanolamine. The enzyme catalyses a 1-acyl-sn-glycero-3-phosphocholine = a 1-acyl-sn-glycero-2,3-cyclic phosphate + choline. It catalyses the reaction a 1-acyl-sn-glycero-3-phosphoethanolamine = a 1-acyl-sn-glycero-2,3-cyclic phosphate + ethanolamine. Functionally, dermonecrotic toxins cleave the phosphodiester linkage between the phosphate and headgroup of certain phospholipids (sphingolipid and lysolipid substrates), forming an alcohol (often choline) and a cyclic phosphate. This toxin acts on sphingomyelin (SM). It may also act on ceramide phosphoethanolamine (CPE), lysophosphatidylcholine (LPC) and lysophosphatidylethanolamine (LPE), but not on lysophosphatidylserine (LPS), and lysophosphatidylglycerol (LPG). It acts by transphosphatidylation, releasing exclusively cyclic phosphate products as second products. Induces dermonecrosis, hemolysis, increased vascular permeability, edema, inflammatory response, and platelet aggregation. The polypeptide is Dermonecrotic toxin SpeSicTox-betaIB2b (Sicarius peruensis (Six-eyed sand spider)).